Consider the following 256-residue polypeptide: Tryptophan synthase alpha chain (256 aa).

Catalysis depends on proton acceptor residues Glu51 and Asp62.

This sequence belongs to the TrpA family. As to quaternary structure, tetramer of two alpha and two beta chains.

The enzyme catalyses (1S,2R)-1-C-(indol-3-yl)glycerol 3-phosphate + L-serine = D-glyceraldehyde 3-phosphate + L-tryptophan + H2O. It functions in the pathway amino-acid biosynthesis; L-tryptophan biosynthesis; L-tryptophan from chorismate: step 5/5. Its function is as follows. The alpha subunit is responsible for the aldol cleavage of indoleglycerol phosphate to indole and glyceraldehyde 3-phosphate. This chain is Tryptophan synthase alpha chain, found in Solidesulfovibrio magneticus (strain ATCC 700980 / DSM 13731 / RS-1) (Desulfovibrio magneticus).